Consider the following 342-residue polypeptide: Autoinducer 2 import system permease protein LsrC (342 aa).

Residues 1–13 lie on the Periplasmic side of the membrane; it reads MLKFIQNNREITA. A helical membrane pass occupies residues 14–34; that stretch reads LLAVVLLFVLPGFLDRQYLSV. The Cytoplasmic segment spans residues 35-38; sequence QTLT. The helical transmembrane segment at 39–59 threads the bilayer; the sequence is MVYSSAQILILLAMGATLVML. The Periplasmic segment spans residues 60–69; sequence TRNIDVSVGS. Residues 70 to 90 form a helical membrane-spanning segment; sequence ITGMCAVLLGMLLNAGYSLPV. The Cytoplasmic portion of the chain corresponds to 91–92; that stretch reads AC. A helical transmembrane segment spans residues 93–113; sequence VATLLLGLLAGFFNGVLVAWL. Position 114 (lysine 114) is a topological domain, periplasmic. Residues 115–135 form a helical membrane-spanning segment; that stretch reads IPAIVATLGTLGLYRGIMLLW. Residues 136-154 lie on the Cytoplasmic side of the membrane; sequence TGGKWIEGLPAELKQLSAP. Residues 155-175 form a helical membrane-spanning segment; the sequence is LLLGVSAIGWLTIILVAFMAW. Residues 176-212 lie on the Periplasmic side of the membrane; that stretch reads LLAKTAFGRSFYATGDNLQGARQLGVRTEAIRIVAFS. A helical transmembrane segment spans residues 213 to 233; it reads LNGCMAALAGIVFASQIGFIP. Topologically, residues 234-251 are cytoplasmic; it reads NQTGTGLEMKAIAACVLG. The chain crosses the membrane as a helical span at residues 252 to 272; sequence GISLLGGSGAIIGAVLGAWFL. The Periplasmic segment spans residues 273–283; the sequence is TQIDSVLVLLR. The chain crosses the membrane as a helical span at residues 284-304; it reads IPAWWNDFIAGLVLLAVLVFD. Residues 305-342 are Cytoplasmic-facing; the sequence is GRLRCALERNLRRQKYARFMTPPPSVKPASSGKKREAA.

The protein belongs to the binding-protein-dependent transport system permease family. AraH/RbsC subfamily. In terms of assembly, the complex is composed of two ATP-binding proteins (LsrA), two transmembrane proteins (LsrC and LsrD) and a solute-binding protein (LsrB).

It localises to the cell inner membrane. Functionally, part of the ABC transporter complex LsrABCD involved in autoinducer 2 (AI-2) import. Probably responsible for the translocation of the substrate across the membrane. This Escherichia coli (strain K12 / DH10B) protein is Autoinducer 2 import system permease protein LsrC (lsrC).